A 258-amino-acid chain; its full sequence is Archaerhodopsin-3 (258 aa).

A propeptide spanning residues 1 to 6 is cleaved from the precursor; the sequence is MDPIAL. The residue at position 7 (Gln7) is a Pyrrolidone carboxylic acid. Over 7 to 18 the chain is Extracellular; that stretch reads QAGYDLLGDGRP. Residues 19 to 40 traverse the membrane as a helical segment; that stretch reads ETLWLGIGTLLMLIGTFYFLVR. Over 41 to 49 the chain is Cytoplasmic; the sequence is GWGVTDKDA. The chain crosses the membrane as a helical span at residues 50–71; it reads REYYAVTILVPGIASAAYLSMF. Residues 72-89 lie on the Extracellular side of the membrane; the sequence is FGIGLTEVTVGGEMLDIY. The chain crosses the membrane as a helical span at residues 90–111; the sequence is YARYADWLFTTPLLLLDLALLA. The Cytoplasmic portion of the chain corresponds to 112-114; sequence KVD. The helical transmembrane segment at 115–137 threads the bilayer; the sequence is RVTIGTLVGVDALMIVTGLIGAL. Residues 138 to 141 are Extracellular-facing; sequence SHTA. A helical transmembrane segment spans residues 142-170; it reads IARYSWWLFSTICMIVVLYFLATSLRSAA. Residues 171–173 are Cytoplasmic-facing; the sequence is KER. The helical transmembrane segment at 174–202 threads the bilayer; the sequence is GPEVASTFNTLTALVLVLWTAYPILWIIG. At 203–210 the chain is on the extracellular side; the sequence is TEGAGVVG. Residues 211–243 traverse the membrane as a helical segment; it reads LGIETLLFMVLDVTAKVGFGFILLRSRAILGDT. Lys226 is modified (N6-(retinylidene)lysine). At 244–258 the chain is on the cytoplasmic side; the sequence is EAPEPSAGADVSAAD.

This sequence belongs to the archaeal/bacterial/fungal opsin family.

The protein localises to the cell membrane. Light-driven proton pump. In Halorubrum sodomense, this protein is Archaerhodopsin-3 (aop3).